Consider the following 411-residue polypeptide: Translation initiation factor 2 subunit gamma (411 aa).

One can recognise a tr-type G domain in the interval 9–203 (QAEVNIGMVG…AIQDFIPTPK (195 aa)). The segment at 18–25 (GHVDHGKT) is G1. Residues Asp21, Thr25, Gly46, and Ser48 each contribute to the Mg(2+) site. 21–26 (DHGKTS) contributes to the GTP binding site. The interval 46–50 (GISIR) is G2. Zn(2+)-binding residues include Cys61, Cys64, Cys73, and Cys76. The interval 90–93 (DSPG) is G3. Residues 146–149 (NKID) and 181–183 (SAH) each bind GTP. The tract at residues 146-149 (NKID) is G4. Positions 181–183 (SAH) are G5.

The protein belongs to the TRAFAC class translation factor GTPase superfamily. Classic translation factor GTPase family. EIF2G subfamily. As to quaternary structure, heterotrimer composed of an alpha, a beta and a gamma chain. Mg(2+) serves as cofactor.

It carries out the reaction GTP + H2O = GDP + phosphate + H(+). In terms of biological role, eIF-2 functions in the early steps of protein synthesis by forming a ternary complex with GTP and initiator tRNA. The chain is Translation initiation factor 2 subunit gamma from Methanocaldococcus jannaschii (strain ATCC 43067 / DSM 2661 / JAL-1 / JCM 10045 / NBRC 100440) (Methanococcus jannaschii).